The chain runs to 155 residues: Ribonuclease H (155 aa).

One can recognise an RNase H type-1 domain in the interval 4–145 (TEPTVYAYTD…ADRLANRGID (142 aa)). Residues aspartate 13, glutamate 51, aspartate 73, and aspartate 137 each coordinate Mg(2+).

This sequence belongs to the RNase H family. As to quaternary structure, monomer. Mg(2+) is required as a cofactor.

It localises to the cytoplasm. The enzyme catalyses Endonucleolytic cleavage to 5'-phosphomonoester.. Endonuclease that specifically degrades the RNA of RNA-DNA hybrids. This chain is Ribonuclease H, found in Methylococcus capsulatus (strain ATCC 33009 / NCIMB 11132 / Bath).